A 671-amino-acid chain; its full sequence is UvrABC system protein C (671 aa).

The 80-residue stretch at 16-95 (TTPGVYRFRD…IKEFKPRFNV (80 aa)) folds into the GIY-YIG domain. The UVR domain occupies 207-242 (KRFISRLEKDMAAAVAELDYERAAGLRDDIIALRKV).

This sequence belongs to the UvrC family. In terms of assembly, interacts with UvrB in an incision complex.

The protein resides in the cytoplasm. Functionally, the UvrABC repair system catalyzes the recognition and processing of DNA lesions. UvrC both incises the 5' and 3' sides of the lesion. The N-terminal half is responsible for the 3' incision and the C-terminal half is responsible for the 5' incision. The sequence is that of UvrABC system protein C from Paenarthrobacter aurescens (strain TC1).